Here is a 197-residue protein sequence, read N- to C-terminus: GTP cyclohydrolase-2 (197 aa).

A GTP-binding site is contributed by 50 to 54; that stretch reads RIHSE. 3 residues coordinate Zn(2+): C55, C66, and C68. GTP-binding positions include Q71, 93 to 95, and T115; that span reads EGR. Catalysis depends on D127, which acts as the Proton acceptor. The active-site Nucleophile is R129. The GTP site is built by T150 and K155.

Belongs to the GTP cyclohydrolase II family. Requires Zn(2+) as cofactor.

The catalysed reaction is GTP + 4 H2O = 2,5-diamino-6-hydroxy-4-(5-phosphoribosylamino)-pyrimidine + formate + 2 phosphate + 3 H(+). Its pathway is cofactor biosynthesis; riboflavin biosynthesis; 5-amino-6-(D-ribitylamino)uracil from GTP: step 1/4. Catalyzes the conversion of GTP to 2,5-diamino-6-ribosylamino-4(3H)-pyrimidinone 5'-phosphate (DARP), formate and pyrophosphate. This chain is GTP cyclohydrolase-2, found in Aeromonas hydrophila subsp. hydrophila (strain ATCC 7966 / DSM 30187 / BCRC 13018 / CCUG 14551 / JCM 1027 / KCTC 2358 / NCIMB 9240 / NCTC 8049).